The sequence spans 165 residues: Lipoprotein signal peptidase (165 aa).

4 helical membrane-spanning segments follow: residues 11 to 31 (YWVL…AVLS), 41 to 61 (VIPS…FSFL), 64 to 84 (QGGW…AYLV), and 92 to 112 (FATL…GNVI). Catalysis depends on residues Asp122 and Asp140. The helical transmembrane segment at 132-152 (FYPAFNIADSFICVGAVLAVL) threads the bilayer.

Belongs to the peptidase A8 family.

The protein localises to the cell inner membrane. It catalyses the reaction Release of signal peptides from bacterial membrane prolipoproteins. Hydrolyzes -Xaa-Yaa-Zaa-|-(S,diacylglyceryl)Cys-, in which Xaa is hydrophobic (preferably Leu), and Yaa (Ala or Ser) and Zaa (Gly or Ala) have small, neutral side chains.. It functions in the pathway protein modification; lipoprotein biosynthesis (signal peptide cleavage). Its function is as follows. This protein specifically catalyzes the removal of signal peptides from prolipoproteins. The sequence is that of Lipoprotein signal peptidase from Neisseria meningitidis serogroup A / serotype 4A (strain DSM 15465 / Z2491).